Consider the following 171-residue polypeptide: Phosphopantetheine adenylyltransferase (171 aa).

Threonine 9 serves as a coordination point for substrate. ATP is bound by residues threonine 9–phenylalanine 10 and histidine 17. Substrate contacts are provided by lysine 41, leucine 78, and arginine 92. Residues glycine 93–arginine 95, glutamate 103, and histidine 128–lysine 134 each bind ATP.

Belongs to the bacterial CoaD family. Homohexamer. It depends on Mg(2+) as a cofactor.

It is found in the cytoplasm. It carries out the reaction (R)-4'-phosphopantetheine + ATP + H(+) = 3'-dephospho-CoA + diphosphate. It participates in cofactor biosynthesis; coenzyme A biosynthesis; CoA from (R)-pantothenate: step 4/5. Reversibly transfers an adenylyl group from ATP to 4'-phosphopantetheine, yielding dephospho-CoA (dPCoA) and pyrophosphate. The polypeptide is Phosphopantetheine adenylyltransferase (Dinoroseobacter shibae (strain DSM 16493 / NCIMB 14021 / DFL 12)).